A 230-amino-acid chain; its full sequence is 2-amino-5-formylamino-6-ribosylaminopyrimidin-4(3H)-one 5'-monophosphate deformylase (230 aa).

Fe cation-binding residues include Glu-29, His-31, Asp-40, and His-109.

The protein belongs to the creatininase superfamily. FAPy deformylase family. Homodimer. Requires Fe(2+) as cofactor. The cofactor is Zn(2+).

The catalysed reaction is 2-amino-5-formylamino-6-(5-phospho-D-ribosylamino)pyrimidin-4(3H)-one + H2O = 2,5-diamino-6-(1-D-ribosylamino)pyrimidin-4(3H)-one 5'-phosphate + formate + H(+). The protein operates within cofactor biosynthesis; coenzyme F420 biosynthesis. It participates in cofactor biosynthesis; riboflavin biosynthesis. In terms of biological role, catalyzes the hydrolysis of the formamide of 2-amino-5-formylamino-6-ribosylamino-4(3H)-pyrimidinone 5'-monophosphate (FAPy) to form 2,5-diamino-6-ribosylamino-4(3H)-pyrimidinone 5'-phosphate (APy). The protein is 2-amino-5-formylamino-6-ribosylaminopyrimidin-4(3H)-one 5'-monophosphate deformylase of Methanobrevibacter smithii (strain ATCC 35061 / DSM 861 / OCM 144 / PS).